Consider the following 274-residue polypeptide: Dermonecrotic toxin SdSicTox-betaIIB1bv (274 aa).

H5 is a catalytic residue. Residues E25 and D27 each coordinate Mg(2+). The active-site Nucleophile is the H41. 2 cysteine pairs are disulfide-bonded: C45–C51 and C47–C190. D85 contacts Mg(2+).

Belongs to the arthropod phospholipase D family. Class II subfamily. It depends on Mg(2+) as a cofactor. In terms of tissue distribution, expressed by the venom gland.

Its subcellular location is the secreted. It catalyses the reaction an N-(acyl)-sphingosylphosphocholine = an N-(acyl)-sphingosyl-1,3-cyclic phosphate + choline. The enzyme catalyses an N-(acyl)-sphingosylphosphoethanolamine = an N-(acyl)-sphingosyl-1,3-cyclic phosphate + ethanolamine. The catalysed reaction is a 1-acyl-sn-glycero-3-phosphocholine = a 1-acyl-sn-glycero-2,3-cyclic phosphate + choline. It carries out the reaction a 1-acyl-sn-glycero-3-phosphoethanolamine = a 1-acyl-sn-glycero-2,3-cyclic phosphate + ethanolamine. In terms of biological role, dermonecrotic toxins cleave the phosphodiester linkage between the phosphate and headgroup of certain phospholipids (sphingolipid and lysolipid substrates), forming an alcohol (often choline) and a cyclic phosphate. This toxin acts on sphingomyelin (SM). It may also act on ceramide phosphoethanolamine (CPE), lysophosphatidylcholine (LPC) and lysophosphatidylethanolamine (LPE), but not on lysophosphatidylserine (LPS), and lysophosphatidylglycerol (LPG). It acts by transphosphatidylation, releasing exclusively cyclic phosphate products as second products. Induces dermonecrosis, hemolysis, increased vascular permeability, edema, inflammatory response, and platelet aggregation. The sequence is that of Dermonecrotic toxin SdSicTox-betaIIB1bv from Sicarius cf. damarensis (strain GJB-2008) (Six-eyed sand spider).